The sequence spans 492 residues: GMP reductase (492 aa).

NADP(+) is bound by residues 30–31 (SR) and R78. CBS domains are found at residues 99–162 (LIED…LVET) and 164–223 (MTPV…RNAT). Residues 260 to 262 (DIA) and 313 to 314 (VG) contribute to the NADP(+) site. K(+) contacts are provided by G314, G316, and C319. The active-site Thioimidate intermediate is the C319. T321 functions as the Proton donor/acceptor in the catalytic mechanism. R322 lines the K(+) pocket. Residues 352–354 (DGG), 375–376 (GN), and 401–403 (GMA) contribute to the GMP site. Residues M402 and 454–457 (SGIS) each bind NADP(+). Positions 490–492 (SKL) match the Microbody targeting signal motif.

Belongs to the IMPDH/GMPR family. GuaC type 1 subfamily. In terms of assembly, homotetramer.

The protein resides in the glycosome. The catalysed reaction is IMP + NH4(+) + NADP(+) = GMP + NADPH + 2 H(+). Activated by GTP and inhibited by XMP and the IMP analogs allopurinol nucleotide and thiopurinol nucleotide. Its function is as follows. Catalyzes the irreversible NADPH-dependent deamination of GMP to IMP. It functions in the conversion of nucleobase, nucleoside and nucleotide derivatives of G to A nucleotides, and in maintaining the intracellular balance of A and G nucleotides. The sequence is that of GMP reductase from Leishmania donovani.